A 72-amino-acid chain; its full sequence is DNA-directed RNA polymerase subunit epsilon (72 aa).

Belongs to the RNA polymerase subunit epsilon family. As to quaternary structure, RNAP is composed of a core of 2 alpha, a beta and a beta' subunit. The core is associated with a delta subunit, and at least one of epsilon or omega. When a sigma factor is associated with the core the holoenzyme is formed, which can initiate transcription.

The enzyme catalyses RNA(n) + a ribonucleoside 5'-triphosphate = RNA(n+1) + diphosphate. In terms of biological role, a non-essential component of RNA polymerase (RNAP). The sequence is that of DNA-directed RNA polymerase subunit epsilon from Staphylococcus aureus (strain JH1).